Reading from the N-terminus, the 158-residue chain is Ribosome maturation factor RimP (158 aa).

Belongs to the RimP family.

It localises to the cytoplasm. Functionally, required for maturation of 30S ribosomal subunits. The polypeptide is Ribosome maturation factor RimP (Leuconostoc citreum (strain KM20)).